A 649-amino-acid chain; its full sequence is Acetyl-coenzyme A synthetase (649 aa).

CoA contacts are provided by residues 190–193 (RGGR) and Thr310. ATP contacts are provided by residues 386–388 (GEP), 410–415 (DTWWQT), Asp499, and Arg514. A CoA-binding site is contributed by Ser522. Arg525 serves as a coordination point for ATP. 3 residues coordinate Mg(2+): Val536, His538, and Val541. Arg583 contributes to the CoA binding site. The residue at position 608 (Lys608) is an N6-acetyllysine.

The protein belongs to the ATP-dependent AMP-binding enzyme family. Mg(2+) serves as cofactor. In terms of processing, acetylated. Deacetylation by the SIR2-homolog deacetylase activates the enzyme.

It carries out the reaction acetate + ATP + CoA = acetyl-CoA + AMP + diphosphate. Its function is as follows. Catalyzes the conversion of acetate into acetyl-CoA (AcCoA), an essential intermediate at the junction of anabolic and catabolic pathways. AcsA undergoes a two-step reaction. In the first half reaction, AcsA combines acetate with ATP to form acetyl-adenylate (AcAMP) intermediate. In the second half reaction, it can then transfer the acetyl group from AcAMP to the sulfhydryl group of CoA, forming the product AcCoA. This chain is Acetyl-coenzyme A synthetase, found in Methylorubrum populi (strain ATCC BAA-705 / NCIMB 13946 / BJ001) (Methylobacterium populi).